A 139-amino-acid polypeptide reads, in one-letter code: Succinate dehydrogenase assembly factor 2, mitochondrial (139 aa).

A mitochondrion-targeting transit peptide spans 1–28 (MLRKTNLSNITTLLRSARCMNRMPQLRF).

It belongs to the SDHAF2 family. As to quaternary structure, interacts with the flavoprotein subunit within the SDH catalytic dimer.

The protein localises to the mitochondrion. Its subcellular location is the mitochondrion matrix. Its function is as follows. Plays an essential role in the assembly of succinate dehydrogenase (SDH), an enzyme complex (also referred to as respiratory complex II) that is a component of both the tricarboxylic acid (TCA) cycle and the mitochondrial electron transport chain, and which couples the oxidation of succinate to fumarate with the reduction of ubiquinone (coenzyme Q) to ubiquinol. Required for flavinylation (covalent attachment of FAD) of the flavoprotein subunit of the SDH catalytic dimer. The polypeptide is Succinate dehydrogenase assembly factor 2, mitochondrial (Schizosaccharomyces pombe (strain 972 / ATCC 24843) (Fission yeast)).